The primary structure comprises 344 residues: Biotin synthase (344 aa).

A Radical SAM core domain is found at 40–267; the sequence is AQVQVSTLLS…KSMVRLSAGR (228 aa). 3 residues coordinate [4Fe-4S] cluster: cysteine 55, cysteine 59, and cysteine 62. Positions 99, 130, 190, and 262 each coordinate [2Fe-2S] cluster.

Belongs to the radical SAM superfamily. Biotin synthase family. As to quaternary structure, homodimer. The cofactor is [4Fe-4S] cluster. It depends on [2Fe-2S] cluster as a cofactor.

The catalysed reaction is (4R,5S)-dethiobiotin + (sulfur carrier)-SH + 2 reduced [2Fe-2S]-[ferredoxin] + 2 S-adenosyl-L-methionine = (sulfur carrier)-H + biotin + 2 5'-deoxyadenosine + 2 L-methionine + 2 oxidized [2Fe-2S]-[ferredoxin]. It functions in the pathway cofactor biosynthesis; biotin biosynthesis; biotin from 7,8-diaminononanoate: step 2/2. Catalyzes the conversion of dethiobiotin (DTB) to biotin by the insertion of a sulfur atom into dethiobiotin via a radical-based mechanism. This chain is Biotin synthase, found in Xanthomonas axonopodis pv. citri (strain 306).